The sequence spans 354 residues: Uroporphyrinogen decarboxylase (354 aa).

Residues arginine 27 to arginine 31, aspartate 77, tyrosine 154, threonine 209, and histidine 327 contribute to the substrate site.

It belongs to the uroporphyrinogen decarboxylase family. As to quaternary structure, homodimer.

The protein localises to the cytoplasm. The enzyme catalyses uroporphyrinogen III + 4 H(+) = coproporphyrinogen III + 4 CO2. It functions in the pathway porphyrin-containing compound metabolism; protoporphyrin-IX biosynthesis; coproporphyrinogen-III from 5-aminolevulinate: step 4/4. Functionally, catalyzes the decarboxylation of four acetate groups of uroporphyrinogen-III to yield coproporphyrinogen-III. The protein is Uroporphyrinogen decarboxylase of Psychromonas ingrahamii (strain DSM 17664 / CCUG 51855 / 37).